The primary structure comprises 285 residues: Transcription initiation factor IIE subunit beta (285 aa).

Composition is skewed to polar residues over residues 1-10 (MSSLSDQLSS) and 33-44 (TPTAYLNSNDGH). The disordered stretch occupies residues 1-56 (MSSLSDQLSSFKKKVANQPIYAKPQPRQPASPTPTAYLNSNDGHSSAASSPGSYSL). Over residues 45–55 (SSAASSPGSYS) the composition is skewed to low complexity. The TFIIE beta DNA-binding region spans 67–142 (YSQPADSGVG…FTFKPLHNIR (76 aa)). Positions 240-272 (PTSVDPSTVKRAGHNQTPKQKKPKTRRGKITNT) are disordered. Positions 258–268 (KQKKPKTRRGK) are enriched in basic residues.

The protein belongs to the TFIIE beta subunit family. As to quaternary structure, TFIIE is a tetramer of two alpha (tfa1) and two beta (tfa2) subunits. TFIIE associates with RNA polymerase II via the beta subunit.

It is found in the nucleus. In terms of biological role, recruits TFIIH to the initiation complex and stimulates the RNA polymerase II C-terminal domain kinase and DNA-dependent ATPase activities of TFIIH. Both TFIIH and TFIIE are required for promoter clearance by RNA polymerase. The polypeptide is Transcription initiation factor IIE subunit beta (tfa2) (Schizosaccharomyces pombe (strain 972 / ATCC 24843) (Fission yeast)).